We begin with the raw amino-acid sequence, 477 residues long: 3-isopropylmalate dehydratase large subunit (477 aa).

Residues cysteine 358, cysteine 419, and cysteine 422 each contribute to the [4Fe-4S] cluster site.

This sequence belongs to the aconitase/IPM isomerase family. LeuC type 1 subfamily. As to quaternary structure, heterodimer of LeuC and LeuD. It depends on [4Fe-4S] cluster as a cofactor.

The enzyme catalyses (2R,3S)-3-isopropylmalate = (2S)-2-isopropylmalate. It participates in amino-acid biosynthesis; L-leucine biosynthesis; L-leucine from 3-methyl-2-oxobutanoate: step 2/4. Functionally, catalyzes the isomerization between 2-isopropylmalate and 3-isopropylmalate, via the formation of 2-isopropylmaleate. The protein is 3-isopropylmalate dehydratase large subunit of Acinetobacter baylyi (strain ATCC 33305 / BD413 / ADP1).